A 558-amino-acid polypeptide reads, in one-letter code: GPI mannosyltransferase 3 (558 aa).

4 helical membrane passes run 53–73 (GLRS…LKLL), 81–101 (VWFA…VSVF), 164–184 (AYCG…LLTL), and 190–210 (VPFL…AVVL). The N-linked (GlcNAc...) asparagine glycan is linked to asparagine 220. Residues 234–254 (IVLTGLIVLVAVLGGVMVLDY) form a helical membrane-spanning segment. Asparagine 275 carries an N-linked (GlcNAc...) asparagine glycan. Helical transmembrane passes span 292 to 312 (VLVG…LVLW), 323 to 343 (PVLG…LIDH), 348 to 368 (FVFV…VRWS), and 372 to 392 (AVVV…IYLM).

Belongs to the glycosyltransferase 22 family. PIGB subfamily.

It is found in the endoplasmic reticulum membrane. It functions in the pathway glycolipid biosynthesis; glycosylphosphatidylinositol-anchor biosynthesis. In terms of biological role, mannosyltransferase involved in glycosylphosphatidylinositol-anchor biosynthesis. Transfers the third alpha-1,2-mannose to Man2-GlcN-acyl-PI during GPI precursor assembly. The polypeptide is GPI mannosyltransferase 3 (GPI10) (Trypanosoma brucei brucei (strain 927/4 GUTat10.1)).